A 182-amino-acid polypeptide reads, in one-letter code: Adenine phosphoribosyltransferase (182 aa).

Residue Ala133–Ser137 coordinates AMP.

This sequence belongs to the purine/pyrimidine phosphoribosyltransferase family. In terms of assembly, homodimer. Mg(2+) is required as a cofactor.

The protein resides in the cytoplasm. The protein localises to the nucleus. The enzyme catalyses AMP + diphosphate = 5-phospho-alpha-D-ribose 1-diphosphate + adenine. It participates in purine metabolism; AMP biosynthesis via salvage pathway; AMP from adenine: step 1/1. In terms of biological role, catalyzes a salvage reaction resulting in the formation of AMP, that is energically less costly than de novo synthesis. This chain is Adenine phosphoribosyltransferase (APT1), found in Yarrowia lipolytica (strain CLIB 122 / E 150) (Yeast).